The following is a 221-amino-acid chain: Endonuclease V (221 aa).

2 residues coordinate Mg(2+): D44 and D112.

This sequence belongs to the endonuclease V family. Mg(2+) serves as cofactor.

The protein localises to the cytoplasm. The catalysed reaction is Endonucleolytic cleavage at apurinic or apyrimidinic sites to products with a 5'-phosphate.. Functionally, DNA repair enzyme involved in the repair of deaminated bases. Selectively cleaves double-stranded DNA at the second phosphodiester bond 3' to a deoxyinosine leaving behind the intact lesion on the nicked DNA. This Nostoc punctiforme (strain ATCC 29133 / PCC 73102) protein is Endonuclease V.